The chain runs to 414 residues: Serine hydroxymethyltransferase (414 aa).

(6S)-5,6,7,8-tetrahydrofolate-binding positions include L121 and 125-127 (GHL). N6-(pyridoxal phosphate)lysine is present on K229.

The protein belongs to the SHMT family. As to quaternary structure, homodimer. Requires pyridoxal 5'-phosphate as cofactor.

Its subcellular location is the cytoplasm. It catalyses the reaction (6R)-5,10-methylene-5,6,7,8-tetrahydrofolate + glycine + H2O = (6S)-5,6,7,8-tetrahydrofolate + L-serine. It functions in the pathway one-carbon metabolism; tetrahydrofolate interconversion. The protein operates within amino-acid biosynthesis; glycine biosynthesis; glycine from L-serine: step 1/1. Functionally, catalyzes the reversible interconversion of serine and glycine with tetrahydrofolate (THF) serving as the one-carbon carrier. This reaction serves as the major source of one-carbon groups required for the biosynthesis of purines, thymidylate, methionine, and other important biomolecules. Also exhibits THF-independent aldolase activity toward beta-hydroxyamino acids, producing glycine and aldehydes, via a retro-aldol mechanism. In Polynucleobacter asymbioticus (strain DSM 18221 / CIP 109841 / QLW-P1DMWA-1) (Polynucleobacter necessarius subsp. asymbioticus), this protein is Serine hydroxymethyltransferase.